A 246-amino-acid polypeptide reads, in one-letter code: Ribonuclease PH (246 aa).

Phosphate contacts are provided by residues arginine 91 and 129–131 (GTR).

Belongs to the RNase PH family. Homohexameric ring arranged as a trimer of dimers.

The catalysed reaction is tRNA(n+1) + phosphate = tRNA(n) + a ribonucleoside 5'-diphosphate. Functionally, phosphorolytic 3'-5' exoribonuclease that plays an important role in tRNA 3'-end maturation. Removes nucleotide residues following the 3'-CCA terminus of tRNAs; can also add nucleotides to the ends of RNA molecules by using nucleoside diphosphates as substrates, but this may not be physiologically important. Probably plays a role in initiation of 16S rRNA degradation (leading to ribosome degradation) during starvation. In Paraburkholderia phymatum (strain DSM 17167 / CIP 108236 / LMG 21445 / STM815) (Burkholderia phymatum), this protein is Ribonuclease PH.